Consider the following 50-residue polypeptide: Alpha-conotoxin CnIG (50 aa).

The first 7 residues, 1-7 (LTTTVVS), serve as a signal peptide directing secretion. Residues 1 to 13 (LTTTVVSFPSDSA) are compositionally biased toward polar residues. Residues 1–26 (LTTTVVSFPSDSASDGRDNEAKDERS) form a disordered region. Positions 8-35 (FPSDSASDGRDNEAKDERSDMYELKRNG) are excised as a propeptide. Over residues 14–26 (SDGRDNEAKDERS) the composition is skewed to basic and acidic residues. 2 cysteine pairs are disulfide-bonded: Cys-37-Cys-42 and Cys-38-Cys-48. A Cysteine amide modification is found at Cys-48.

It belongs to the conotoxin A superfamily. As to expression, expressed by the venom duct.

Its subcellular location is the secreted. This chain is Alpha-conotoxin CnIG, found in Conus consors (Singed cone).